We begin with the raw amino-acid sequence, 146 residues long: Prefoldin subunit alpha (146 aa).

Belongs to the prefoldin alpha subunit family. Heterohexamer of two alpha and four beta subunits.

The protein localises to the cytoplasm. Functionally, molecular chaperone capable of stabilizing a range of proteins. Seems to fulfill an ATP-independent, HSP70-like function in archaeal de novo protein folding. The chain is Prefoldin subunit alpha from Methanobrevibacter smithii (strain ATCC 35061 / DSM 861 / OCM 144 / PS).